The chain runs to 612 residues: Alpha-glycerophosphate oxidase (612 aa).

Position 21–49 (21–49 (DLLIIGGGITGAGVALQAAASGLDTGLIE)) interacts with FAD. A compositionally biased stretch (basic and acidic residues) spans 398–408 (VETSTSEKELD). The interval 398–418 (VETSTSEKELDPSAVSRGSSF) is disordered.

Belongs to the FAD-dependent glycerol-3-phosphate dehydrogenase family. It depends on FAD as a cofactor.

The protein localises to the cytoplasm. It carries out the reaction sn-glycerol 3-phosphate + O2 = dihydroxyacetone phosphate + H2O2. This Streptococcus pyogenes serotype M18 (strain MGAS8232) protein is Alpha-glycerophosphate oxidase (glpO).